A 199-amino-acid chain; its full sequence is Dephospho-CoA kinase (199 aa).

The 196-residue stretch at 4–199 (VLGITGGIAT…KWLEEQIGKK (196 aa)) folds into the DPCK domain. An ATP-binding site is contributed by 12–17 (ATGKST).

It belongs to the CoaE family.

The protein resides in the cytoplasm. The enzyme catalyses 3'-dephospho-CoA + ATP = ADP + CoA + H(+). It participates in cofactor biosynthesis; coenzyme A biosynthesis; CoA from (R)-pantothenate: step 5/5. In terms of biological role, catalyzes the phosphorylation of the 3'-hydroxyl group of dephosphocoenzyme A to form coenzyme A. This Enterococcus faecalis (strain ATCC 700802 / V583) protein is Dephospho-CoA kinase.